Consider the following 426-residue polypeptide: Glutamate-1-semialdehyde 2,1-aminomutase (426 aa).

Lys265 is subject to N6-(pyridoxal phosphate)lysine.

Belongs to the class-III pyridoxal-phosphate-dependent aminotransferase family. HemL subfamily. Homodimer. Pyridoxal 5'-phosphate is required as a cofactor.

It localises to the cytoplasm. The enzyme catalyses (S)-4-amino-5-oxopentanoate = 5-aminolevulinate. It participates in porphyrin-containing compound metabolism; protoporphyrin-IX biosynthesis; 5-aminolevulinate from L-glutamyl-tRNA(Glu): step 2/2. The chain is Glutamate-1-semialdehyde 2,1-aminomutase from Salmonella gallinarum (strain 287/91 / NCTC 13346).